Reading from the N-terminus, the 99-residue chain is DNA-directed RNA polymerase subunit omega (99 aa).

It belongs to the RNA polymerase subunit omega family. As to quaternary structure, the RNAP catalytic core consists of 2 alpha, 1 beta, 1 beta' and 1 omega subunit. When a sigma factor is associated with the core the holoenzyme is formed, which can initiate transcription.

The catalysed reaction is RNA(n) + a ribonucleoside 5'-triphosphate = RNA(n+1) + diphosphate. Functionally, promotes RNA polymerase assembly. Latches the N- and C-terminal regions of the beta' subunit thereby facilitating its interaction with the beta and alpha subunits. In Deinococcus radiodurans (strain ATCC 13939 / DSM 20539 / JCM 16871 / CCUG 27074 / LMG 4051 / NBRC 15346 / NCIMB 9279 / VKM B-1422 / R1), this protein is DNA-directed RNA polymerase subunit omega (rpoZ).